A 301-amino-acid chain; its full sequence is Ornithine carbamoyltransferase (301 aa).

Residues Arg100 and 127–130 contribute to the carbamoyl phosphate site; that span reads HPCQ. L-ornithine contacts are provided by residues Asn158, Asp221, and 225–226; that span reads SM. Carbamoyl phosphate contacts are provided by Cys260 and Arg288.

This sequence belongs to the aspartate/ornithine carbamoyltransferase superfamily. OTCase family. In terms of assembly, homododecamer.

It is found in the cytoplasm. It catalyses the reaction carbamoyl phosphate + L-ornithine = L-citrulline + phosphate + H(+). It functions in the pathway amino-acid biosynthesis; L-arginine biosynthesis; L-arginine from L-ornithine and carbamoyl phosphate: step 1/3. In terms of biological role, reversibly catalyzes the transfer of the carbamoyl group from carbamoyl phosphate (CP) to the N(epsilon) atom of ornithine (ORN) to produce L-citrulline. This chain is Ornithine carbamoyltransferase (argF), found in Moritella profunda.